The chain runs to 360 residues: POU domain, class 5, transcription factor 1 (360 aa).

Disordered regions lie at residues 1-52 (MAGH…PGVG) and 88-114 (GGLE…SPEP). The 9aaTAD motif lies at 4–12 (HLASDFAFS). S111 is subject to Phosphoserine; by MAPK. K123 participates in a covalent cross-link: Glycyl lysine isopeptide (Lys-Gly) (interchain with G-Cter in SUMO). In terms of domain architecture, POU-specific spans 138–212 (DIKALQKELE…LLQKWVEEAD (75 aa)). DNA-binding residues include R157 and Q164. DNA-binding stretches follow at residues 180–186 (SQTTICR) and 193–196 (SFKN). A DNA-binding region (homeobox) is located at residues 230–289 (RKRKRTSIENRVRGNLENLFLQCPKPTLQQISHIAQQLGLEKDVVRVWFCNRRQKGKRSS). Phosphothreonine is present on T235. Residues S236, S289, S290, and S355 each carry the phosphoserine modification.

The protein belongs to the POU transcription factor family. Class-5 subfamily. As to quaternary structure, interacts with PKM. Interacts with WWP2. Interacts with UBE2I and ZSCAN10. Interacts with PCGF1. Interacts with ESRRB; recruits ESRRB near the POU5F1-SOX2 element in the NANOG proximal promoter; the interaction is DNA independent. Interacts with ZNF322. Interacts with MAPK8 and MAPK9; the interaction allows MAPK8 and MAPK9 to phosphorylate POU5F1 on Ser-355. Interacts (when phosphorylated on Ser-355) with FBXW8. Interacts with FBXW4. Interacts with SOX2 and SOX15; binds synergistically with either SOX2 or SOX15 to DNA. Interacts with DDX56. Sumoylation enhances the protein stability, DNA binding and transactivation activity. Sumoylation is required for enhanced YES1 expression. Post-translationally, ubiquitinated; undergoes 'Lys-63'-linked polyubiquitination by WWP2 leading to proteasomal degradation. In terms of processing, ERK1/2-mediated phosphorylation at Ser-111 promotes nuclear exclusion and proteasomal degradation. Phosphorylation at Thr-235 and Ser-236 decrease DNA-binding and alters ability to activate transcription. As to expression, expressed in developing brain. Highest levels found in specific cell layers of the cortex, the olfactory bulb, the hippocampus and the cerebellum. Low levels of expression in adult tissues.

The protein resides in the cytoplasm. It is found in the nucleus. Functionally, transcription factor that binds to the octamer motif (5'-ATTTGCAT-3'). Forms a trimeric complex with SOX2 or SOX15 on DNA and controls the expression of a number of genes involved in embryonic development such as YES1, FGF4, UTF1 and ZFP206. Critical for early embryogenesis and for embryonic stem cell pluripotency. The chain is POU domain, class 5, transcription factor 1 (POU5F1) from Homo sapiens (Human).